We begin with the raw amino-acid sequence, 474 residues long: Alanine/serine racemase (474 aa).

Residues 139–140 and Gln-282 each bind pyridoxal 5'-phosphate; that span reads GS. Lys-308 bears the N6-(pyridoxal phosphate)lysine mark. Residue Thr-336 coordinates pyridoxal 5'-phosphate.

The protein belongs to the class-III pyridoxal-phosphate-dependent aminotransferase family. In terms of assembly, homohexamer. Pyridoxal 5'-phosphate serves as cofactor.

It carries out the reaction L-alanine = D-alanine. It catalyses the reaction L-serine = D-serine. With respect to regulation, completely inhibited by hydroxylamine hydrochloride. Catalyzes the interconversion of L-alanine and D-alanine, and L-serine and D-serine. Has weak activity with valine and threonine. This chain is Alanine/serine racemase, found in Pyrococcus horikoshii (strain ATCC 700860 / DSM 12428 / JCM 9974 / NBRC 100139 / OT-3).